Here is a 236-residue protein sequence, read N- to C-terminus: MVVREASAAQASLSQVLPQLRYLHIFLEQVHTHFQEQSVGERGAAIQLAEGLARQLCTDCQLNKLFYREEFVLATLLDPCFKGKIEAILPWGPTDIDHWKQVLVYKVKEIRVSEYSLNSPSPLQSPRGLCVDPTRVAKSSGVEGRSQGEPLQSSSHSGAFLLAQREKGLLESMGLLASERSGGSLSTKSHWASIIVKKYLWENETVGAQDDPLAYWEKKREAWPPSICLTPHRSLL.

The sequence is that of Putative protein ZBED10P from Homo sapiens (Human).